The primary structure comprises 146 residues: 3-dehydroquinate dehydratase (146 aa).

Y24 functions as the Proton acceptor in the catalytic mechanism. Residues N75, H81, and D88 each contribute to the substrate site. H101 functions as the Proton donor in the catalytic mechanism. Substrate is bound by residues 102 to 103 (LS) and R112.

The protein belongs to the type-II 3-dehydroquinase family. Homododecamer.

The catalysed reaction is 3-dehydroquinate = 3-dehydroshikimate + H2O. Its pathway is metabolic intermediate biosynthesis; chorismate biosynthesis; chorismate from D-erythrose 4-phosphate and phosphoenolpyruvate: step 3/7. In terms of biological role, catalyzes a trans-dehydration via an enolate intermediate. In Caulobacter vibrioides (strain ATCC 19089 / CIP 103742 / CB 15) (Caulobacter crescentus), this protein is 3-dehydroquinate dehydratase.